Here is a 407-residue protein sequence, read N- to C-terminus: Arginine deiminase (407 aa).

Residue cysteine 397 is the Amidino-cysteine intermediate of the active site.

It belongs to the arginine deiminase family.

It localises to the cytoplasm. It carries out the reaction L-arginine + H2O = L-citrulline + NH4(+). Its pathway is amino-acid degradation; L-arginine degradation via ADI pathway; carbamoyl phosphate from L-arginine: step 1/2. This chain is Arginine deiminase, found in Limosilactobacillus fermentum (strain NBRC 3956 / LMG 18251) (Lactobacillus fermentum).